The chain runs to 98 residues: UPF0235 protein Ping_3043 (98 aa).

Belongs to the UPF0235 family.

This chain is UPF0235 protein Ping_3043, found in Psychromonas ingrahamii (strain DSM 17664 / CCUG 51855 / 37).